The chain runs to 342 residues: Galactose mutarotase (342 aa).

Ser14 is modified (phosphoserine). Beta-D-galactose is bound by residues 81-82 and His107; that span reads NR. Ser124 is modified (phosphoserine). His176 serves as the catalytic Proton donor. Beta-D-galactose is bound by residues 176 to 178, Asp243, Gln279, and Glu307; that span reads HSY. The Proton acceptor role is filled by Glu307.

Belongs to the aldose epimerase family. As to quaternary structure, monomer.

It is found in the cytoplasm. The catalysed reaction is alpha-D-galactose = beta-D-galactose. It catalyses the reaction alpha-D-glucose = beta-D-glucose. The protein operates within carbohydrate metabolism; hexose metabolism. Its pathway is carbohydrate metabolism; galactose metabolism. In terms of biological role, mutarotase that catalyzes the interconversion of beta-D-galactose and alpha-D-galactose during galactose metabolism. Beta-D-galactose is metabolized in the liver into glucose 1-phosphate, the primary metabolic fuel, by the action of four enzymes that constitute the Leloir pathway: GALM, GALK1 (galactokinase), GALT (galactose-1-phosphate uridylyltransferase) and GALE (UDP-galactose-4'-epimerase). Involved in the maintenance of the equilibrium between the beta- and alpha-anomers of galactose, therefore ensuring a sufficient supply of the alpha-anomer for GALK1. Also active on D-glucose although shows a preference for galactose over glucose. The sequence is that of Galactose mutarotase (GALM) from Sus scrofa (Pig).